Consider the following 838-residue polypeptide: Periostin (838 aa).

Residues 1 to 23 (MVPLLPLYALLLLFLCDINPANA) form the signal peptide. Residues 42 to 96 (GPNVCALQQILGTKKKYFSSCKNWYQGAICGKKTTVLYECCPGYMRMEGMKGCPA) enclose the EMI domain. 5 cysteine pairs are disulfide-bonded: C46–C82, C71–C335, C81–C94, C210–C313, and C469–C474. C62 is modified (S-cysteinyl cysteine). 4 FAS1 domains span residues 99–232 (PIDH…DRVL), 236–367 (GTSI…DEVL), 370–494 (DSAK…REII), and 498–630 (EKSL…DKLL). N601 carries N-linked (GlcNAc...) asparagine glycosylation. The segment at 811 to 838 (QGDTPAKKIPANKRVQGPRRRSREGRSQ) is disordered. A compositionally biased stretch (basic residues) spans 826–838 (QGPRRRSREGRSQ).

Homodimer. Interacts with BMP1 and fibronectin. In terms of processing, gamma-carboxylation is controversial. Gamma-carboxyglutamated; gamma-carboxyglutamate residues are formed by vitamin K dependent carboxylation; these residues may be required for binding to calcium. According to a more recent report in human, does not contain vitamin K-dependent gamma-carboxyglutamate residues. As to expression, preferentially expressed in periosteum and periodontal ligament. Also expressed in the developing and adult heart.

The protein localises to the golgi apparatus. The protein resides in the secreted. It localises to the extracellular space. Its subcellular location is the extracellular matrix. In terms of biological role, induces cell attachment and spreading and plays a role in cell adhesion. Enhances incorporation of BMP1 in the fibronectin matrix of connective tissues, and subsequent proteolytic activation of lysyl oxidase LOX. This Mus musculus (Mouse) protein is Periostin (Postn).